Consider the following 247-residue polypeptide: OCIA domain-containing protein 1 (247 aa).

The OCIA domain occupies 1–112; that stretch reads MNGRADFREP…KKLENSPLGE (112 aa). Phosphoserine occurs at positions 108, 116, and 123. Disordered regions lie at residues 113-153 and 167-230; these read ALRS…ADNI and SASM…MQER. Polar residues-rich tracts occupy residues 136-146 and 168-177; these read SNVSGQSSFGT and ASMNESTPTG. Basic and acidic residues-rich tracts occupy residues 192 to 210 and 218 to 230; these read ESPKRKGVTYEELRSKNRE and HKTDPSVRPMQER. A Phosphoserine modification is found at S193.

This sequence belongs to the OCIAD1 family. As to quaternary structure, interacts with OCIAD2. Interacts with STAT3. Expressed at high levels in the brain and at lower levels in the heart, ovary, testis and kidney. Expression is strongest in embryonic stem cells and in the blood vessels.

Its subcellular location is the endosome. Maintains stem cell potency. Increases STAT3 phosphorylation and controls ERK phosphorylation. May act as a scaffold, increasing STAT3 recruitment onto endosomes. The sequence is that of OCIA domain-containing protein 1 from Mus musculus (Mouse).